The sequence spans 262 residues: Cutinase 2 (262 aa).

A poly(ethylene terephthalate)-binding site is contributed by tyrosine 61. Catalysis depends on serine 131, which acts as the Nucleophile. The poly(ethylene terephthalate) site is built by methionine 132 and tryptophan 156. Active-site charge relay system residues include aspartate 177 and histidine 209. Cysteine 242 and cysteine 260 form a disulfide bridge.

This sequence belongs to the AB hydrolase superfamily.

The protein resides in the secreted. It localises to the periplasm. The catalysed reaction is a butanoate ester + H2O = an aliphatic alcohol + butanoate + H(+). The enzyme catalyses an acetyl ester + H2O = an aliphatic alcohol + acetate + H(+). It carries out the reaction (ethylene terephthalate)(n) + H2O = (ethylene terephthalate)(n-1) + 4-[(2-hydroxyethoxy)carbonyl]benzoate + H(+). It catalyses the reaction cutin + H2O = cutin monomers.. Its function is as follows. Catalyzes the hydrolysis of cutin, a polyester that forms the structure of plant cuticle. Shows esterase activity towards p-nitrophenol-linked aliphatic esters (pNP-aliphatic esters). Capable of degrading the plastic poly(ethylene terephthalate) (PET), the most abundant polyester plastic in the world. Capable of degrading the bioplastic poly(lactic acid) (PLLA). This chain is Cutinase 2, found in Thermobifida cellulosilytica.